The primary structure comprises 169 residues: Probable calcium-binding protein CML20 (169 aa).

Positions 1–23 (MSSIYRTVSRKEKPRRHHGLTTQ) are disordered. EF-hand domains follow at residues 23 to 58 (QKKQ…LGFE), 59 to 94 (MTEE…KIGE), 96 to 131 (DTKE…LGEN), and 132 to 167 (FTDA…TAYG). D36, D38, S40, T42, E47, D72, D74, S76, E83, D109, D111, N113, K115, D120, D145, D147, D149, E151, and E156 together coordinate Ca(2+).

In terms of assembly, interacts with TON1A and TON1B. Interacts with SAC3A and SAC3B. Interacts with UCH1 and UCH2.

Its function is as follows. Potential calcium sensor. The protein is Probable calcium-binding protein CML20 of Arabidopsis thaliana (Mouse-ear cress).